The following is an 858-amino-acid chain: Translation initiation factor IF-2 (858 aa).

Residues 49 to 271 are disordered; sequence TTTVTHPKSQ…NKPAPVRKDK (223 aa). A compositionally biased stretch (low complexity) spans 80–226; it reads NQQQSNSRHQ…RFGGSLNSNN (147 aa). Residues 239-256 show a composition bias toward basic residues; it reads NRRRNNRNNKSRNNKNQR. The 170-residue stretch at 359–528 folds into the tr-type G domain; the sequence is PRAPVVTVMG…LLQSEVLELT (170 aa). The segment at 368–375 is G1; the sequence is GHVDHGKT. GTP is bound at residue 368–375; sequence GHVDHGKT. Residues 393 to 397 are G2; sequence GITQA. Residues 414–417 form a G3 region; the sequence is DTPG. GTP contacts are provided by residues 414–418 and 468–471; these read DTPGH and NKID. Residues 468–471 are G4; sequence NKID. Residues 504 to 506 form a G5 region; it reads SAK.

This sequence belongs to the TRAFAC class translation factor GTPase superfamily. Classic translation factor GTPase family. IF-2 subfamily.

Its subcellular location is the cytoplasm. Functionally, one of the essential components for the initiation of protein synthesis. Protects formylmethionyl-tRNA from spontaneous hydrolysis and promotes its binding to the 30S ribosomal subunits. Also involved in the hydrolysis of GTP during the formation of the 70S ribosomal complex. The protein is Translation initiation factor IF-2 of Lactiplantibacillus plantarum (strain ATCC BAA-793 / NCIMB 8826 / WCFS1) (Lactobacillus plantarum).